The chain runs to 181 residues: ADP-ribosylation factor 3 (181 aa).

A lipid anchor (N-myristoyl glycine) is attached at glycine 2. Residues 24 to 31, 67 to 71, and 126 to 129 each bind GTP; these read GLDAAGKT, DVGGQ, and NKQD.

Belongs to the small GTPase superfamily. Arf family. As to quaternary structure, interacts with PRKCABP. Interacts with PI4KB and NCS1/FREQ at the Golgi complex.

The protein localises to the golgi apparatus. It is found in the cytoplasm. It localises to the perinuclear region. In terms of biological role, GTP-binding protein that functions as an allosteric activator of the cholera toxin catalytic subunit, an ADP-ribosyltransferase. Involved in protein trafficking; may modulate vesicle budding and uncoating within the Golgi apparatus. In Bos taurus (Bovine), this protein is ADP-ribosylation factor 3 (ARF3).